The following is a 385-amino-acid chain: Chaperone protein DnaJ 2 (385 aa).

One can recognise a J domain in the interval 10–75 (DYYKELGVSS…AKRKEYDETR (66 aa)). The CR-type zinc finger occupies 155–233 (GVTVPLRMTS…CHGSGIQNRT (79 aa)). Residues Cys168, Cys171, Cys185, Cys188, Cys207, Cys210, Cys221, and Cys224 each coordinate Zn(2+). CXXCXGXG motif repeat units lie at residues 168–175 (CTTCHGSG), 185–192 (CPICNGTG), 207–214 (CDGCRGTG), and 221–228 (CVDCHGSG).

It belongs to the DnaJ family. As to quaternary structure, homodimer. Zn(2+) is required as a cofactor.

Its subcellular location is the cytoplasm. In terms of biological role, participates actively in the response to hyperosmotic and heat shock by preventing the aggregation of stress-denatured proteins and by disaggregating proteins, also in an autonomous, DnaK-independent fashion. Unfolded proteins bind initially to DnaJ; upon interaction with the DnaJ-bound protein, DnaK hydrolyzes its bound ATP, resulting in the formation of a stable complex. GrpE releases ADP from DnaK; ATP binding to DnaK triggers the release of the substrate protein, thus completing the reaction cycle. Several rounds of ATP-dependent interactions between DnaJ, DnaK and GrpE are required for fully efficient folding. Also involved, together with DnaK and GrpE, in the DNA replication of plasmids through activation of initiation proteins. The sequence is that of Chaperone protein DnaJ 2 from Nocardia farcinica (strain IFM 10152).